Here is a 548-residue protein sequence, read N- to C-terminus: Probable 2,3-bisphosphoglycerate-independent phosphoglycerate mutase (548 aa).

2 residues coordinate Mn(2+): aspartate 20 and serine 73. Serine 73 acts as the Phosphoserine intermediate in catalysis. Residues histidine 134, 164–165, arginine 200, arginine 207, 279–282, and lysine 354 contribute to the substrate site; these read RD and RGDR. Residues aspartate 422, histidine 426, aspartate 463, histidine 464, and histidine 493 each contribute to the Mn(2+) site.

This sequence belongs to the BPG-independent phosphoglycerate mutase family. In terms of assembly, monomer. Mn(2+) is required as a cofactor.

The enzyme catalyses (2R)-2-phosphoglycerate = (2R)-3-phosphoglycerate. Its pathway is carbohydrate degradation; glycolysis; pyruvate from D-glyceraldehyde 3-phosphate: step 3/5. Functionally, catalyzes the interconversion of 2-phosphoglycerate and 3-phosphoglycerate. The sequence is that of Probable 2,3-bisphosphoglycerate-independent phosphoglycerate mutase (gpmI) from Leptospira interrogans serogroup Icterohaemorrhagiae serovar copenhageni (strain Fiocruz L1-130).